A 295-amino-acid chain; its full sequence is Biliverdin reductase A (295 aa).

Positions 1 to 2 are excised as a propeptide; it reads MS. NAD(+)-binding positions include 18–19, 76–79, and Tyr97; these read RA and SSSH. Ser154 is subject to Phosphoserine. NAD(+) is bound at residue Ser167. Thr173 carries the post-translational modification Phosphothreonine. Phosphoserine occurs at positions 177 and 229. N6-acetyllysine is present on residues Lys247 and Lys252. Zn(2+)-binding residues include His279, Cys280, Cys291, and His292.

This sequence belongs to the Gfo/Idh/MocA family. Biliverdin reductase subfamily. Monomer. The cofactor is Zn(2+).

The protein localises to the cytoplasm. It is found in the cytosol. It catalyses the reaction (4Z,15Z)-bilirubin IXalpha + NAD(+) = biliverdin IXalpha + NADH + H(+). The enzyme catalyses (4Z,15Z)-bilirubin IXalpha + NADP(+) = biliverdin IXalpha + NADPH + H(+). Its pathway is porphyrin-containing compound metabolism; protoheme degradation. Reduces the gamma-methene bridge of the open tetrapyrrole, biliverdin IXalpha, to bilirubin with the concomitant oxidation of a NADH or NADPH cofactor. Does not reduce bilirubin IXbeta. Uses the reactants NADH or NADPH depending on the pH; NADH is used at the acidic pH range (6-6.9) and NADPH at the alkaline range (8.5-8.7). NADPH, however, is the probable reactant in biological systems. The chain is Biliverdin reductase A from Mus musculus (Mouse).